A 321-amino-acid chain; its full sequence is MASSQGKNELKFADWMATLPESIHSIPLTNLAIPGSHDSFSFYIDEASPVGPEQPETVQNFVSVFGTVAKKLMRKWLATQTMSFTGQLGAGIRYFDLRISTKPRDPDNELYFAHGLFSAKVNEGLEEINAFLTDHHKEVVFLDFNHFYGMQKYHHEKLVQMLKNIYGNKMCPAIFAQEVSLKYLWEKDYQVLVFYHSPVALEVPFLWPGQMMPAPWANTTDPEKLIQFLQASITERRKKGSFFISQVVLTPKASTVVKGVASGLRETITERALPAMMQWIRTQKPGESGINIVTADFVELGDFISTVIKLNYVFNEGEANT.

The 176-residue stretch at 22-197 (SIHSIPLTNL…DYQVLVFYHS (176 aa)) folds into the PI-PLC X-box domain. Active-site residues include histidine 37 and histidine 114.

In terms of tissue distribution, widely expressed, with highest levels in brain, followed by heart atrium. Not detected in small intestine, nor stomach.

It localises to the cytoplasm. The protein is PI-PLC X domain-containing protein 3 (Plcxd3) of Mus musculus (Mouse).